The primary structure comprises 276 residues: Putative pyruvate, phosphate dikinase regulatory protein (276 aa).

154–161 (GVSRTSKS) is an ADP binding site.

It belongs to the pyruvate, phosphate/water dikinase regulatory protein family. PDRP subfamily.

It catalyses the reaction N(tele)-phospho-L-histidyl/L-threonyl-[pyruvate, phosphate dikinase] + ADP = N(tele)-phospho-L-histidyl/O-phospho-L-threonyl-[pyruvate, phosphate dikinase] + AMP + H(+). It carries out the reaction N(tele)-phospho-L-histidyl/O-phospho-L-threonyl-[pyruvate, phosphate dikinase] + phosphate + H(+) = N(tele)-phospho-L-histidyl/L-threonyl-[pyruvate, phosphate dikinase] + diphosphate. Bifunctional serine/threonine kinase and phosphorylase involved in the regulation of the pyruvate, phosphate dikinase (PPDK) by catalyzing its phosphorylation/dephosphorylation. This is Putative pyruvate, phosphate dikinase regulatory protein from Wolbachia pipientis wMel.